A 156-amino-acid polypeptide reads, in one-letter code: V-type proton ATPase 16 kDa proteolipid subunit c (156 aa).

Over 1 to 7 (MAENPIY) the chain is Lumenal. The chain crosses the membrane as a helical span at residues 8–30 (GPFFGVMGAASAIIFSALGAAYG). Over 31 to 52 (TAKSGTGIAAMSVMRPELIMKS) the chain is Cytoplasmic. Residues 53–73 (IIPVVMAGIIAIYGLVVAVLI) form a helical membrane-spanning segment. The Lumenal segment spans residues 74 to 92 (AGSLDAPSNNYTLYKGFIH). A helical transmembrane segment spans residues 93–114 (LGAGLAVGFSGLAAGFAIGIVG). The Cytoplasmic segment spans residues 115–126 (DAGVRGTAQQPR). Residues 127-152 (LFVGMILILIFAEVLGLYGLIVAIYL) form a helical membrane-spanning segment. The Lumenal portion of the chain corresponds to 153-156 (YTKQ).

This sequence belongs to the V-ATPase proteolipid subunit family. As to quaternary structure, V-ATPase is a heteromultimeric enzyme made up of two complexes: the ATP-hydrolytic V1 complex and the proton translocation V0 complex. The V1 complex consists of three catalytic AB heterodimers that form a heterohexamer, three peripheral stalks each consisting of EG heterodimers, one central rotor including subunits D and F, and the regulatory subunits C and H. The proton translocation complex V0 consists of the proton transport subunit a, a ring of proteolipid subunits c9c'', rotary subunit d, subunits e and f, and the accessory subunits VhaAC45 and ATP6AP2.

The protein resides in the membrane. Its function is as follows. Proton-conducting pore forming subunit of the V0 complex of vacuolar(H+)-ATPase (V-ATPase), a multisubunit enzyme composed of a peripheral complex (V1) that hydrolyzes ATP and a membrane integral complex (V0) that translocates protons. V-ATPase is responsible for acidifying and maintaining the pH of intracellular compartments and in some cell types, is targeted to the plasma membrane, where it is responsible for acidifying the extracellular environment. The protein is V-type proton ATPase 16 kDa proteolipid subunit c (VHA16) of Heliothis virescens (Tobacco budworm moth).